A 238-amino-acid chain; its full sequence is Accessory gene regulator A (238 aa).

Positions 2–125 (KIFICEDDPK…LRTRIIDCLE (124 aa)) constitute a Response regulatory domain. Aspartate 59 is subject to 4-aspartylphosphate. The HTH LytTR-type domain maps to 143–238 (IELKRGSNSV…YASVRNVKKK (96 aa)).

The protein resides in the cytoplasm. Its function is as follows. Required for high-level post-exponential phase expression of a series of secreted proteins. This is Accessory gene regulator A (agrA) from Staphylococcus aureus (strain Mu50 / ATCC 700699).